The chain runs to 92 residues: Endoribonuclease HigB (92 aa).

Histidine 92 is a catalytic residue.

Forms a complex with the antitoxin HigA which inhibits the mRNA interferase activity. The heterodimer dimerizes to form a HigB-(HigA)2-HigB tetramer that is able to bind to the DNA.

Toxic component of a type II toxin-antitoxin (TA) system. A ribosome-associated translation-dependent mRNA interferase. Inhibits translation by sequence-specific cleavage of mRNA. Prefers either in-frame or out-of-frame 5'-AAA-3' codons (lysine). Also cleaves the first three AAAs of stretches of four or more A sequences. 20% of codons containing AA are cleaved and occassionally cuts even at a single A. This is Endoribonuclease HigB from Proteus vulgaris.